A 59-amino-acid polypeptide reads, in one-letter code: uncharacterized protein (59 aa).

Residues 1–59 (MAKKPGENTGKNGGIYQEVGPRGGKKDNFATVKDNERLPPTTKPGNGWVLDKRTPDSKK) are disordered. Basic and acidic residues-rich tracts occupy residues 24-37 (GKKD…DNER) and 50-59 (LDKRTPDSKK).

This is an uncharacterized protein from Salmonella phage P22 (Bacteriophage P22).